The chain runs to 190 residues: Hypoxanthine/guanine phosphoribosyltransferase (190 aa).

It belongs to the purine/pyrimidine phosphoribosyltransferase family. Archaeal HPRT subfamily. Homodimer.

The protein resides in the cytoplasm. It carries out the reaction IMP + diphosphate = hypoxanthine + 5-phospho-alpha-D-ribose 1-diphosphate. The catalysed reaction is GMP + diphosphate = guanine + 5-phospho-alpha-D-ribose 1-diphosphate. It participates in purine metabolism; IMP biosynthesis via salvage pathway; IMP from hypoxanthine: step 1/1. Catalyzes a salvage reaction resulting in the formation of IMP that is energically less costly than de novo synthesis. The sequence is that of Hypoxanthine/guanine phosphoribosyltransferase from Methanothrix thermoacetophila (strain DSM 6194 / JCM 14653 / NBRC 101360 / PT) (Methanosaeta thermophila).